Here is a 1315-residue protein sequence, read N- to C-terminus: Serine-aspartate repeat-containing protein D (1315 aa).

The signal sequence occupies residues 1 to 35 (MLNRENKTAITRKGMVSNRLNKFSIRKYTVGTASI). The short motif at 23–34 (FSIRKYTVGTAS) is the YSIRK-G/S signaling motif element. The ligand binding A region stretch occupies residues 36-568 (LVGTTLIFGL…NNQSGGAGQE (533 aa)). Positions 54-185 (ESTNKELNEA…NKKVDAKTES (132 aa)) are disordered. Composition is skewed to polar residues over residues 62–71 (EATTSASDNQ) and 94–108 (EMVS…SNGN). Basic and acidic residues predominate over residues 130–145 (KSDEQASPKSTNEDLN). Polar residues-rich tracts occupy residues 146-155 (TKQTISNQEA) and 163-173 (NKSVVNVQPTN). Over residues 174-183 (EENKKVDAKT) the composition is skewed to basic and acidic residues. CNA-B domains lie at 569-680 (VYKI…IYKP), 681-791 (KYNL…YKTP), 792-901 (KYNL…FYKP), 902-1012 (TYNL…YKTP), and 1013-1123 (KYSL…EEET). Disordered stretches follow at residues 857 to 883 (ETPS…TSTT), 972 to 992 (YTPT…GLTT), and 1078 to 1291 (EKPA…SNNA). Composition is skewed to polar residues over residues 860 to 869 (SGYTPTQVGS) and 972 to 981 (YTPTSVTSGN). Acidic residues-rich tracts occupy residues 1091-1101 (TEDDKDADGGE), 1118-1134 (YYEE…DSDS), 1142-1164 (SDSD…DSDS), and 1172-1254 (SDSD…DSDS). The short motif at 1278–1282 (LPETG) is the LPXTG sorting signal element. A Pentaglycyl murein peptidoglycan amidated threonine modification is found at Thr-1281. The propeptide at 1282–1315 (GNENSGSNNATLFGGLFAALGSLLLFGRRKKQNK) is removed by sortase.

The protein belongs to the serine-aspartate repeat-containing protein (SDr) family. As to quaternary structure, interacts with host DSG1; this interaction increases S.aureus adherence to keratinocytes. Post-translationally, anchored to the cell wall by sortase A.

The protein resides in the secreted. It localises to the cell wall. Functionally, cell surface-associated calcium-binding protein which plays an important role in adhesion and pathogenesis. Mediates interactions with components of the extracellular matrix such as host DSG1 to promote bacterial adhesion to host cells. Contributes to the resistance to killing by innate immune components such as neutrophils present in blood and thus attenuates bacterial clearance. The polypeptide is Serine-aspartate repeat-containing protein D (sdrD) (Staphylococcus aureus (strain Newman)).